A 396-amino-acid polypeptide reads, in one-letter code: Phosphoglycerate kinase (396 aa).

Residues Asp21–Asn23, Arg36, His59–Lys62, Arg119, and Arg156 contribute to the substrate site. ATP-binding positions include Lys206, Glu325, and Gly352–Ser355.

The protein belongs to the phosphoglycerate kinase family. Monomer.

It localises to the cytoplasm. The catalysed reaction is (2R)-3-phosphoglycerate + ATP = (2R)-3-phospho-glyceroyl phosphate + ADP. Its pathway is carbohydrate degradation; glycolysis; pyruvate from D-glyceraldehyde 3-phosphate: step 2/5. In Staphylococcus carnosus (strain TM300), this protein is Phosphoglycerate kinase.